The primary structure comprises 119 residues: MNNKSKGRTAEKIARIFLLSKGYQIIFQNYRFSRLGEIDLICCFDNILIFVEVKSRSSLLWGQPEEAVGYEKQGQLKKLANIFLYEFNEFTEYQIRFDVIAILNNNKVKCEISHLRDAF.

The protein belongs to the UPF0102 family.

This is UPF0102 protein Nther_1376 from Natranaerobius thermophilus (strain ATCC BAA-1301 / DSM 18059 / JW/NM-WN-LF).